Reading from the N-terminus, the 193-residue chain is Peptidyl-tRNA hydrolase (193 aa).

A tRNA-binding site is contributed by Y16. Residue H21 is the Proton acceptor of the active site. TRNA-binding residues include F67, N69, and N115.

The protein belongs to the PTH family. As to quaternary structure, monomer.

It is found in the cytoplasm. The enzyme catalyses an N-acyl-L-alpha-aminoacyl-tRNA + H2O = an N-acyl-L-amino acid + a tRNA + H(+). Functionally, hydrolyzes ribosome-free peptidyl-tRNAs (with 1 or more amino acids incorporated), which drop off the ribosome during protein synthesis, or as a result of ribosome stalling. Its function is as follows. Catalyzes the release of premature peptidyl moieties from peptidyl-tRNA molecules trapped in stalled 50S ribosomal subunits, and thus maintains levels of free tRNAs and 50S ribosomes. The sequence is that of Peptidyl-tRNA hydrolase from Psychrobacter arcticus (strain DSM 17307 / VKM B-2377 / 273-4).